The sequence spans 455 residues: 23S rRNA (uracil(1939)-C(5))-methyltransferase RlmD (455 aa).

In terms of domain architecture, TRAM spans 12–70 (SKQLSAKLSLSVTQLDHLGAGIAQHQGKIVFIPGVLPGETATVQFVEQKKSYAKAKLIS). [4Fe-4S] cluster-binding residues include cysteine 83, cysteine 89, cysteine 92, and cysteine 174. S-adenosyl-L-methionine-binding residues include glutamine 288, phenylalanine 317, asparagine 322, glutamate 338, aspartate 365, and aspartate 385. Cysteine 411 functions as the Nucleophile in the catalytic mechanism.

The protein belongs to the class I-like SAM-binding methyltransferase superfamily. RNA M5U methyltransferase family. RlmD subfamily.

The catalysed reaction is uridine(1939) in 23S rRNA + S-adenosyl-L-methionine = 5-methyluridine(1939) in 23S rRNA + S-adenosyl-L-homocysteine + H(+). Its function is as follows. Catalyzes the formation of 5-methyl-uridine at position 1939 (m5U1939) in 23S rRNA. In Shewanella frigidimarina (strain NCIMB 400), this protein is 23S rRNA (uracil(1939)-C(5))-methyltransferase RlmD.